The sequence spans 388 residues: Pepsin A-5 (388 aa).

The N-terminal stretch at 1-15 is a signal peptide; that stretch reads MKWLLLLGLVALSEC. The propeptide at 16–62 is activation peptide; it reads IMYKVPLIRKKSLRRTLSERGLLKDFLKKHNLNPARKYFPQWEAPTL. Residues 76–385 enclose the Peptidase A1 domain; sequence YFGTIGIGTP…DRANNQVGLA (310 aa). The active site involves Asp94. The cysteines at positions 107 and 112 are disulfide-linked. Ser130 is modified (phosphoserine). Cys268 and Cys272 are oxidised to a cystine. Asp277 is an active-site residue. An intrachain disulfide couples Cys311 to Cys344.

Belongs to the peptidase A1 family.

It is found in the secreted. The enzyme catalyses Preferential cleavage: hydrophobic, preferably aromatic, residues in P1 and P1' positions. Cleaves 1-Phe-|-Val-2, 4-Gln-|-His-5, 13-Glu-|-Ala-14, 14-Ala-|-Leu-15, 15-Leu-|-Tyr-16, 16-Tyr-|-Leu-17, 23-Gly-|-Phe-24, 24-Phe-|-Phe-25 and 25-Phe-|-Tyr-26 bonds in the B chain of insulin.. Its function is as follows. Shows particularly broad specificity; although bonds involving phenylalanine and leucine are preferred, many others are also cleaved to some extent. This Homo sapiens (Human) protein is Pepsin A-5 (PGA5).